Reading from the N-terminus, the 979-residue chain is Putative cellulose synthase-like protein D6 (979 aa).

Residues 1–24 (MMDGESPLRHPRISHVSNSGSDFG) form a disordered region. Low complexity predominate over residues 14-24 (SHVSNSGSDFG). The next 2 membrane-spanning stretches (helical) occupy residues 116–136 (IIIA…ALFL) and 147–167 (ALWL…SWLL). Residues Asp-247 and Asp-683 contribute to the active site. 6 helical membrane-spanning segments follow: residues 765 to 785 (IFIL…HFVV), 788 to 808 (LTGS…GLAV), 837 to 857 (LVAV…SFTL), 882 to 902 (ALMI…LFAV), 913 to 933 (WSNL…MYPF), and 946 to 966 (TVVY…YITI).

Belongs to the glycosyltransferase 2 family. Plant cellulose synthase-like D subfamily.

The protein resides in the golgi apparatus membrane. In terms of biological role, thought to be a Golgi-localized beta-glycan synthase that polymerize the backbones of noncellulosic polysaccharides (hemicelluloses) of plant cell wall. In Arabidopsis thaliana (Mouse-ear cress), this protein is Putative cellulose synthase-like protein D6 (CSLD6).